The primary structure comprises 390 residues: Formate-dependent phosphoribosylglycinamide formyltransferase (390 aa).

N(1)-(5-phospho-beta-D-ribosyl)glycinamide contacts are provided by residues 18-19 (EL) and glutamate 78. ATP contacts are provided by residues arginine 110, lysine 151, 156 to 161 (SSGKGQ), 191 to 194 (EEFL), and glutamate 199. An ATP-grasp domain is found at 115–305 (DLASKELNIK…EFELHLRAFL (191 aa)). Positions 264 and 276 each coordinate Mg(2+). Residues aspartate 283, lysine 353, and 360-361 (RR) contribute to the N(1)-(5-phospho-beta-D-ribosyl)glycinamide site.

Belongs to the PurK/PurT family. In terms of assembly, homodimer.

The catalysed reaction is N(1)-(5-phospho-beta-D-ribosyl)glycinamide + formate + ATP = N(2)-formyl-N(1)-(5-phospho-beta-D-ribosyl)glycinamide + ADP + phosphate + H(+). The protein operates within purine metabolism; IMP biosynthesis via de novo pathway; N(2)-formyl-N(1)-(5-phospho-D-ribosyl)glycinamide from N(1)-(5-phospho-D-ribosyl)glycinamide (formate route): step 1/1. Involved in the de novo purine biosynthesis. Catalyzes the transfer of formate to 5-phospho-ribosyl-glycinamide (GAR), producing 5-phospho-ribosyl-N-formylglycinamide (FGAR). Formate is provided by PurU via hydrolysis of 10-formyl-tetrahydrofolate. The polypeptide is Formate-dependent phosphoribosylglycinamide formyltransferase (Prochlorococcus marinus (strain MIT 9515)).